A 155-amino-acid chain; its full sequence is Photosystem II extrinsic protein V (155 aa).

A signal peptide spans 1-20 (MFVKMIGWLVLFLFAHQTWA). Residues Cys50, Cys53, His54, and His105 each coordinate heme c.

The protein belongs to the cytochrome c family. PsbV subfamily. As to quaternary structure, PSII is composed of 1 copy each of membrane proteins PsbA, PsbB, PsbC, PsbD, PsbE, PsbF, PsbH, PsbI, PsbJ, PsbK, PsbL, PsbM, PsbT, PsbY, PsbZ, Psb30/Ycf12, at least 3 peripheral proteins of the oxygen-evolving complex and a large number of cofactors. It forms dimeric complexes. The extrinsic subunits in red algae are PsbO (OEC33), PsbQ', cytochrome c-550 and PsbU. Heme c is required as a cofactor.

It is found in the plastid. Its subcellular location is the chloroplast thylakoid membrane. In terms of biological role, one of the extrinsic, lumenal subunits of photosystem II (PSII). PSII is a light-driven water plastoquinone oxidoreductase, using light energy to abstract electrons from H(2)O, generating a proton gradient subsequently used for ATP formation. The extrinsic proteins stabilize the structure of photosystem II oxygen-evolving complex (OEC), the ion environment of oxygen evolution and protect the OEC against heat-induced inactivation. Unlike the T.vulcanus ortholog, it does not bind by itself to PSII, but requires all extrinsic members of the OEC. The protein is Photosystem II extrinsic protein V of Cyanidium caldarium (Red alga).